The sequence spans 973 residues: Piwi-like protein 2 (973 aa).

A disordered region spans residues 28-65; that stretch reads WPQASKPLDPALGRGAPAGRGHVFGKPEEPSTQRGPAQ. Over residues 34 to 48 the composition is skewed to low complexity; it reads PLDPALGRGAPAGRG. Position 47 is a symmetric dimethylarginine (arginine 47). An omega-N-methylarginine; by PRMT5; alternate mark is found at arginine 76 and arginine 97. Position 76 is a symmetric dimethylarginine; by PRMT5; alternate (arginine 76). Residue arginine 97 is modified to Symmetric dimethylarginine; alternate. The residue at position 102 (arginine 102) is a Symmetric dimethylarginine; by PRMT5; alternate. Omega-N-methylarginine; alternate is present on arginine 102. Residues arginine 146 and arginine 158 each carry the symmetric dimethylarginine modification. Residues 162-199 form a disordered region; the sequence is GISREVDKPPCTFSTPSRGPPQLSSPPALPQSPLHSPD. Arginine 165 is modified (symmetric dimethylarginine; by PRMT5). In terms of domain architecture, PAZ spans 389-502; that stretch reads CVLDVMHAIY…LLPELSFMTG (114 aa). Arginine 551 carries the symmetric dimethylarginine; by PRMT5 modification. Residues 668-959 enclose the Piwi domain; it reads MVVCIIMGPR…LAFLSGHILH (292 aa). Active-site residues include aspartate 745, glutamate 783, aspartate 815, and histidine 948.

Belongs to the argonaute family. Piwi subfamily. In terms of assembly, interacts with DDX4, MAEL, EIF3A, EIF4E, EIF4G, PRMT5 and WDR77. Associates with EIF4E- and EIF4G-containing m7G cap-binding complexes. Interacts (when methylated on arginine residues) with TDRD1 and TDRKH/TDRD2. Interacts with TDRD12. Component of the PET complex, at least composed of EXD1, PIWIL2, TDRD12 and piRNAs. Interacts with MOV10L1. Interacts with GPAT2. Interacts with TEX19. Interacts with GSK3B. Interacts (via PIWI domain) with BMAL1 and CLOCK. Interacts with TEX15. Requires Mg(2+) as cofactor. In terms of processing, arginine methylation by PRMT5 is required for the interaction with Tudor domain-containing protein TDRD1 and subsequent localization to the meiotic nuage, also named P granule. Expressed in adult testis and in most tumors.

It is found in the cytoplasm. Endoribonuclease that plays a central role during spermatogenesis by repressing transposable elements and preventing their mobilization, which is essential for the germline integrity. Plays an essential role in meiotic differentiation of spermatocytes, germ cell differentiation and in self-renewal of spermatogonial stem cells. Acts via the piRNA metabolic process, which mediates the repression of transposable elements during meiosis by forming complexes composed of piRNAs and Piwi proteins and govern the methylation and subsequent repression of transposons. During piRNA biosynthesis, plays a key role in the piRNA amplification loop, also named ping-pong amplification cycle, by acting as a 'slicer-competent' piRNA endoribonuclease that cleaves primary piRNAs, which are then loaded onto 'slicer-incompetent' PIWIL4. PIWIL2 slicing produces a pre-miRNA intermediate, which is then processed in mature piRNAs, and as well as a 16 nucleotide by-product that is degraded. Required for PIWIL4/MIWI2 nuclear localization and association with secondary piRNAs antisense. Besides their function in transposable elements repression, piRNAs are probably involved in other processes during meiosis such as translation regulation. Indirectly modulates expression of genes such as PDGFRB, SLC2A1, ITGA6, GJA7, THY1, CD9 and STRA8. When overexpressed, acts as an oncogene by inhibition of apoptosis and promotion of proliferation in tumors. Represses circadian rhythms by promoting the stability and activity of core clock components BMAL1 and CLOCK by inhibiting GSK3B-mediated phosphorylation and ubiquitination-dependent degradation of these proteins. This is Piwi-like protein 2 (PIWIL2) from Homo sapiens (Human).